A 304-amino-acid chain; its full sequence is UDP-3-O-acyl-N-acetylglucosamine deacetylase (304 aa).

Residues H78, H237, and D241 each coordinate Zn(2+). H264 functions as the Proton donor in the catalytic mechanism.

It belongs to the LpxC family. Requires Zn(2+) as cofactor.

It catalyses the reaction a UDP-3-O-[(3R)-3-hydroxyacyl]-N-acetyl-alpha-D-glucosamine + H2O = a UDP-3-O-[(3R)-3-hydroxyacyl]-alpha-D-glucosamine + acetate. Its pathway is glycolipid biosynthesis; lipid IV(A) biosynthesis; lipid IV(A) from (3R)-3-hydroxytetradecanoyl-[acyl-carrier-protein] and UDP-N-acetyl-alpha-D-glucosamine: step 2/6. In terms of biological role, catalyzes the hydrolysis of UDP-3-O-myristoyl-N-acetylglucosamine to form UDP-3-O-myristoylglucosamine and acetate, the committed step in lipid A biosynthesis. The sequence is that of UDP-3-O-acyl-N-acetylglucosamine deacetylase from Methylococcus capsulatus (strain ATCC 33009 / NCIMB 11132 / Bath).